Here is a 437-residue protein sequence, read N- to C-terminus: Coiled-coil domain-containing protein 78 (437 aa).

3 coiled-coil regions span residues 83–114, 147–287, and 360–408; these read HLRE…LHGN, EELK…QRQE, and QRLQ…YKQE.

Belongs to the CCDC78 family.

It localises to the cytoplasm. The protein resides in the cytoskeleton. The protein localises to the microtubule organizing center. It is found in the centrosome. Its subcellular location is the centriole. It localises to the perinuclear region. The protein resides in the cell membrane. The protein localises to the sarcolemma. It is found in the sarcoplasmic reticulum. Functionally, component of the deuterosome, a structure that promotes de novo centriole amplification in multiciliated cells that can generate more than 100 centrioles. Deuterosome-mediated centriole amplification occurs in terminally differentiated multiciliated cells (G1/0) and not in S phase. Essential for centriole amplification and is required for CEP152 localization to the deuterosome. This chain is Coiled-coil domain-containing protein 78 (Ccdc78), found in Mus musculus (Mouse).